A 1158-amino-acid chain; its full sequence is MTLHAYLGRAGTGKSTKMLTEIKQKMKADPLGDPIILIAPTQSTFQLEQAFVNDPELNGSLRTEVLHFERLSHRIFQEVGSYSEQKLSKAATEMMIYNIVQEQQKYLKLYQSQAKYYGFSEKLTEQIQDFKKYAVTPEHLEHFIADKNMQTRTKNKLEDIALIYREFEQRIQNEFITGEDSLQYFIDCMPKSEWLKRADIYIDGFHNFSTIEYLIIKGLIKYAKSVTIILTTDGNHDQFSLFRKPSEVLRHIEEIANELNISIERQYFNQLYRFNNQDLKHLEQEFDALQINRVACQGHINILESATMREEINEIARRIIVDIRDKQLRYQDIAILYRDESYAYLFDSILPLYNIPYNIDTKRSMTHHPVMEMIRSLIEVIQSNWQVNPMLRLLKTDVLTASYLKSAYLVDLLENFVLERGIYGKRWLDDELFNVEHFSKMGRKAHKLTEDERNTFEQVVKLKKDVIDKILHFEKQMSQAETVKDFATAFYESMEYFELPNQLMTERDELDLNGNHEKAEEIDQIWNGLIQILDDLVLVFGDEPMSMERFLEVFDIGLEQLEFVMIPQTLDQVSIGTMDLAKVDNKQHVYLVGMNDGTMPQPVTASSLITDEEKKYFEQQANVELSPTSDILQMDEAFVCYVAMTRAKGDVTFSYSLMGSSGDDKEISPFLNQIQSLFNQLEITNIPQYHEVNPLSLMQHAKQTKITLFEALRAWLYDEIVADSWLDAYQVIRDSDHLNQGLDYLMSALTFDNETVKLGETLSKDLYGKEINASVSRFEGYQQCPFKHYASHGLKLNERTKYELQNFDLGDIFHSVLKYISERINGDFKQLDLKKIRQLTNEALEEILPKVQFNLLNSSAYYRYLSRRIGAIVETTLSALKYQGTYSKFMPKHFETSFRRKPRTNDELIAQTLTTTQGIPINIRGQIDRIDTYTKNDTSFVNIIDYKSSEGSATLDLTKVYYGMQMQMMTYMDIVLQNKQRLGLTDIVKPGGLLYFHVHEPRIKFKSWSDIDEDKLEQDLIKKFKLSGLVNADQTVIDALDIRLEPKFTSDIVPVGLNKDGSLSKRGSQVADEATIYKFIQHNKENFIETASNIMDGHTEVAPLKYKQKLPCAFCSYQSVCHVDGMIDSKRYRTVDETINPIEAIQNININDEFGGEQ.

The UvrD-like helicase ATP-binding domain maps to 1-275 (MTLHAYLGRA…QYFNQLYRFN (275 aa)). Position 8-15 (8-15 (GRAGTGKS)) interacts with ATP. Residues 269–583 (NQLYRFNNQD…SIGTMDLAKV (315 aa)) enclose the UvrD-like helicase C-terminal domain. Residues C784, C1112, C1115, and C1121 each coordinate [4Fe-4S] cluster.

This sequence belongs to the helicase family. AddB/RexB type 1 subfamily. As to quaternary structure, heterodimer of AddA and AddB. It depends on Mg(2+) as a cofactor. [4Fe-4S] cluster serves as cofactor.

In terms of biological role, the heterodimer acts as both an ATP-dependent DNA helicase and an ATP-dependent, dual-direction single-stranded exonuclease. Recognizes the chi site generating a DNA molecule suitable for the initiation of homologous recombination. The AddB subunit has 5' -&gt; 3' nuclease activity but not helicase activity. The protein is ATP-dependent helicase/deoxyribonuclease subunit B of Staphylococcus aureus (strain USA300).